A 418-amino-acid chain; its full sequence is MIFDKGNVEDFDKELWDAIHAEEERQEHHIELIASENMVSKAVMAAQGSVLTNKYAEGYPGNRYYGGTECVDIVETLAIERAKKLFGAAFANVQAHSGSQANAAAYMALIEAGDTVLGMDLAAGGHLTHGSPVNFSGKTYHFVGYSVDADTEMLNYEAILEQAKAVQPKLIVAGASAYSRSIDFEKFRAIADHVGAYLMVDMAHIAGLVAAGVHPSPVPYAHIVTSTTHKTLRGPRGGLILTNDEALAKKINSAVFPGLQGGPLEHVIAAKAVAFKEALDPAFKDYAQAIIDNTAAMAAVFAQDDRFRLISGGTDNHVFLVDVTKVIANGKLAQILLDEVNITLNKNAIPFETLSPFKTSGIRIGCAAITSRGMGVKESQTIAHLIIKALVNHNQTVILEEVRQEVRQLTDAFPLYKK.

(6S)-5,6,7,8-tetrahydrofolate-binding positions include Leu121 and 125–127; that span reads GHL. The residue at position 230 (Lys230) is an N6-(pyridoxal phosphate)lysine. 355–357 is a (6S)-5,6,7,8-tetrahydrofolate binding site; it reads SPF.

It belongs to the SHMT family. Homodimer. The cofactor is pyridoxal 5'-phosphate.

It is found in the cytoplasm. The enzyme catalyses (6R)-5,10-methylene-5,6,7,8-tetrahydrofolate + glycine + H2O = (6S)-5,6,7,8-tetrahydrofolate + L-serine. The protein operates within one-carbon metabolism; tetrahydrofolate interconversion. Its pathway is amino-acid biosynthesis; glycine biosynthesis; glycine from L-serine: step 1/1. Functionally, catalyzes the reversible interconversion of serine and glycine with tetrahydrofolate (THF) serving as the one-carbon carrier. This reaction serves as the major source of one-carbon groups required for the biosynthesis of purines, thymidylate, methionine, and other important biomolecules. Also exhibits THF-independent aldolase activity toward beta-hydroxyamino acids, producing glycine and aldehydes, via a retro-aldol mechanism. This is Serine hydroxymethyltransferase from Streptococcus pyogenes serotype M6 (strain ATCC BAA-946 / MGAS10394).